The primary structure comprises 567 residues: Zinc finger protein 512 (567 aa).

Residues 1–32 are disordered; the sequence is MSSRLGAVPATSGPTTFKQQRSTRIVGAKNSR. Over residues 12–23 the composition is skewed to polar residues; that stretch reads SGPTTFKQQRST. Glycyl lysine isopeptide (Lys-Gly) (interchain with G-Cter in SUMO2) cross-links involve residues Lys-18 and Lys-84. A disordered region spans residues 86 to 148; it reads AATSHVEGSG…QARRIRKEPP (63 aa). A compositionally biased stretch (basic residues) spans 119-130; sequence KKHKLYGRKQRP. The C2H2-type 1 zinc finger occupies 197 to 220; sequence FTCHHCGKQLRSLAGMKYHVMANH. A Glycyl lysine isopeptide (Lys-Gly) (interchain with G-Cter in SUMO2) cross-link involves residue Lys-227. The C2H2-type 2 zinc finger occupies 287 to 310; that stretch reads LKCHHCGKPYRSKAGLAYHLRSEH. Residue Lys-333 forms a Glycyl lysine isopeptide (Lys-Gly) (interchain with G-Cter in SUMO2) linkage. The segment at 406–430 adopts a C2H2-type 3; atypical zinc-finger fold; the sequence is IQCPNQGCEAVYSSVSGLKAHLGSC. The segment at 440–463 adopts a C2H2-type 4 zinc-finger fold; sequence YKCLLCQKEFVSESGVKYHINSVH. The disordered stretch occupies residues 486-567; the sequence is QRQQEEEKRR…PKTNHKRGRK (82 aa). The segment covering 495–508 has biased composition (basic residues); it reads RQQHRSRRSLRRRQ. A compositionally biased stretch (basic and acidic residues) spans 523 to 532; it reads VGKDQRRNNE. A compositionally biased stretch (basic residues) spans 556–567; the sequence is KPPKTNHKRGRK.

This sequence belongs to the krueppel C2H2-type zinc-finger protein family.

Its subcellular location is the nucleus. May be involved in transcriptional regulation. This is Zinc finger protein 512 (ZNF512) from Pongo abelii (Sumatran orangutan).